The chain runs to 271 residues: Formamidopyrimidine-DNA glycosylase (271 aa).

The active-site Schiff-base intermediate with DNA is the P2. E3 (proton donor) is an active-site residue. K58 functions as the Proton donor; for beta-elimination activity in the catalytic mechanism. The DNA site is built by H91, R110, and R152. An FPG-type zinc finger spans residues 237-271 (QIYGRSAHPCPICGTPIRLERIGQRASYYCTQCQH). The Proton donor; for delta-elimination activity role is filled by R261.

It belongs to the FPG family. In terms of assembly, monomer. Zn(2+) serves as cofactor.

It catalyses the reaction Hydrolysis of DNA containing ring-opened 7-methylguanine residues, releasing 2,6-diamino-4-hydroxy-5-(N-methyl)formamidopyrimidine.. It carries out the reaction 2'-deoxyribonucleotide-(2'-deoxyribose 5'-phosphate)-2'-deoxyribonucleotide-DNA = a 3'-end 2'-deoxyribonucleotide-(2,3-dehydro-2,3-deoxyribose 5'-phosphate)-DNA + a 5'-end 5'-phospho-2'-deoxyribonucleoside-DNA + H(+). Functionally, involved in base excision repair of DNA damaged by oxidation or by mutagenic agents. Acts as a DNA glycosylase that recognizes and removes damaged bases. Has a preference for oxidized purines, such as 7,8-dihydro-8-oxoguanine (8-oxoG). Has AP (apurinic/apyrimidinic) lyase activity and introduces nicks in the DNA strand. Cleaves the DNA backbone by beta-delta elimination to generate a single-strand break at the site of the removed base with both 3'- and 5'-phosphates. The sequence is that of Formamidopyrimidine-DNA glycosylase from Nitrosococcus oceani (strain ATCC 19707 / BCRC 17464 / JCM 30415 / NCIMB 11848 / C-107).